The primary structure comprises 290 residues: MFSLLRKAIDVNRSRITLHGIKVHSINTFRLIPYSLSLTKQIRFYASEGTDAGEMEKGLSVVNANHENRPFRDLEGYHFNTFTFLKTLMDKGYTEKEAEGLLEVTNMFVTDMLRHSHLNYLSEADFENCSYLFRTALSELRSEKINMRKDQISSLRSGLFSNQREVESLEQLVHEQLNKLNTESKMEFENRKNDTKNEVQQLSARIVELHNLLAVSLGKLRAENERQKWDQIRKAAGVVMAFTGFLVLVIPFGLGVRSRKKEKQDELDNLGSFNLDNKRDDYTDTNLSHM.

Residues 161-216 (SNQREVESLEQLVHEQLNKLNTESKMEFENRKNDTKNEVQQLSARIVELHNLLAVS) adopt a coiled-coil conformation. A helical transmembrane segment spans residues 236 to 256 (AGVVMAFTGFLVLVIPFGLGV).

It localises to the mitochondrion membrane. This is an uncharacterized protein from Schizosaccharomyces pombe (strain 972 / ATCC 24843) (Fission yeast).